Reading from the N-terminus, the 250-residue chain is NADH-quinone oxidoreductase subunit C (250 aa).

Positions 193 to 250 (GMTPPLPGDEKADMPPIDDPMVTEGPEDTGAGARANAKAAEGTPADPPAMDDEEEDDA) are disordered. Residues 222–236 (GAGARANAKAAEGTP) are compositionally biased toward low complexity. The span at 241–250 (AMDDEEEDDA) shows a compositional bias: acidic residues.

Belongs to the complex I 30 kDa subunit family. NDH-1 is composed of 14 different subunits. Subunits NuoB, C, D, E, F, and G constitute the peripheral sector of the complex.

Its subcellular location is the cell inner membrane. The catalysed reaction is a quinone + NADH + 5 H(+)(in) = a quinol + NAD(+) + 4 H(+)(out). Its function is as follows. NDH-1 shuttles electrons from NADH, via FMN and iron-sulfur (Fe-S) centers, to quinones in the respiratory chain. The immediate electron acceptor for the enzyme in this species is believed to be ubiquinone. Couples the redox reaction to proton translocation (for every two electrons transferred, four hydrogen ions are translocated across the cytoplasmic membrane), and thus conserves the redox energy in a proton gradient. The sequence is that of NADH-quinone oxidoreductase subunit C from Erythrobacter litoralis (strain HTCC2594).